The primary structure comprises 557 residues: Protein PNS1 (557 aa).

The interval M1–Q58 is disordered. The Cytoplasmic segment spans residues M1–W99. The span at G41 to Q58 shows a compositional bias: polar residues. Residues P100–L120 form a helical membrane-spanning segment. Residues R121–S147 are Extracellular-facing. The helical transmembrane segment at V148–L168 threads the bilayer. Over C169 to K174 the chain is Cytoplasmic. The helical transmembrane segment at F175 to Y195 threads the bilayer. Residues M196 to Y200 are Extracellular-facing. The helical transmembrane segment at W201 to M221 threads the bilayer. Topologically, residues R222–L246 are cytoplasmic. The chain crosses the membrane as a helical span at residues F247–V267. Residues V268–H292 are Extracellular-facing. The N-linked (GlcNAc...) asparagine glycan is linked to N284. The chain crosses the membrane as a helical span at residues A293 to I313. The Cytoplasmic segment spans residues R314–A350. Residues M351–F371 traverse the membrane as a helical segment. Over R372–R393 the chain is Extracellular. The chain crosses the membrane as a helical span at residues I394 to N414. Topologically, residues H415–N454 are cytoplasmic. The helical transmembrane segment at V455–Y475 threads the bilayer. Residues L476–D488 are Extracellular-facing. The chain crosses the membrane as a helical span at residues F489–N509. Residues E510–V557 lie on the Cytoplasmic side of the membrane.

This sequence belongs to the CTL (choline transporter-like) family.

The protein resides in the cell membrane. Probably involved in transport through the plasma membrane. The sequence is that of Protein PNS1 (PNS1) from Candida glabrata (strain ATCC 2001 / BCRC 20586 / JCM 3761 / NBRC 0622 / NRRL Y-65 / CBS 138) (Yeast).